Consider the following 631-residue polypeptide: Phosphomethylpyrimidine synthase (631 aa).

Substrate-binding positions include N239, M268, Y297, H333, 353 to 355, 394 to 397, and E433; these read SRG and DGLR. Position 437 (H437) interacts with Zn(2+). Residue Y460 coordinates substrate. H501 is a binding site for Zn(2+). Residues C581, C584, and C589 each coordinate [4Fe-4S] cluster.

It belongs to the ThiC family. In terms of assembly, homodimer. The cofactor is [4Fe-4S] cluster.

It carries out the reaction 5-amino-1-(5-phospho-beta-D-ribosyl)imidazole + S-adenosyl-L-methionine = 4-amino-2-methyl-5-(phosphooxymethyl)pyrimidine + CO + 5'-deoxyadenosine + formate + L-methionine + 3 H(+). The protein operates within cofactor biosynthesis; thiamine diphosphate biosynthesis. In terms of biological role, catalyzes the synthesis of the hydroxymethylpyrimidine phosphate (HMP-P) moiety of thiamine from aminoimidazole ribotide (AIR) in a radical S-adenosyl-L-methionine (SAM)-dependent reaction. The chain is Phosphomethylpyrimidine synthase from Shigella boydii serotype 4 (strain Sb227).